Consider the following 2062-residue polypeptide: MPKSGFTKPIQSENSDSDSNMVEKPYGRKSKDKIASYSKTPKIERSDVSKEMKEKSSMKRKLPFTISPSRNEERDSDTDSDPGHTSENWGERLISSYRTYSEKEGPEKKKTKKEAGNKKSTPVSILFGYPLSERKQMALLMQMTARDNSPDSTPNHPSQTTPAQKKTPSSSSRQKDKVNKRNERGETPLHMAAIRGDVKQVKELISLGANVNVKDFAGWTPLHEACNVGYYDVAKILIAAGADVNTQGLDDDTPLHDSASSGHRDIVKLLLRHGGNPFQANKHGERPVDVAETEELELLLKREVPLSDDDESYTDSEEAQSVNPSSVDENIDSETEKDSLICESKQILPSKTPLPSALDEYEFKDDDDEEINKMIDDRHILRKEQRKENEPEAEKTHLFAKQEKAFYPKSFKSKKQKPSRVLYSSTESSDEEALQNKKISTSCSVIPETSNSDMQTKKEYVVSGEHKQKGKVKRKLKNQNKNKENQELKQEKEGKENTRITNLTVNTGLDCSEKTREEGNFRKSFSPKDDTSLHLFHISTGKSPKHSCGLSEKQSTPLKQEHTKTCLSPGSSEMSLQPDLVRYDNTESEFLPESSSVKSCKHKEKSKHQKDFHLEFGEKSNAKIKDEDHSPTFENSDCTLKKMDKEGKTLKKHKLKHKEREKEKHKKEIEGEKEKYKTKDSAKELQRSVEFDREFWKENFFKSDETEDLFLNMEHESLTLEKKSKLEKNIKDDKSTKEKHVSKERNFKEERDKIKKESEKSFREEKIKDLKEERENIPTDKDSEFTSLGMSAIEESIGLHLVEKEIDIEKQEKHIKESKEKPEKRSQIKEKDIEKMERKTFEKEKKIKHEHKSEKDKLDLSECVDKIKEKDKLYSHHTEKCHKEGEKSKNTAAIKKTDDREKSREKMDRKHDKEKPEKERHLAESKEKHLMEKKNKQSDNSEYSKSEKGKNKEKDRELDKKEKSRDKESINITNSKHIQEEKKSSIVDGNKAQHEKPLSLKEKTKDEPLKTPDGKEKDKKDKDIDRYKERDKHKDKIQINSLLKLKSEADKPKPKSSPASKDTRPKEKRLVNDDLMQTSFERMLSLKDLEIEQWHKKHKEKIKQKEKERLRNRNCLELKIKDKEKTKHTPTESKNKELTRSKSSEVTDAYTKEKQPKDAVSNRSQSVDTKNVMTLGKSSFVSDNSLNRSPRSENEKPGLSSRSVSMISVASSEDSCHTTVTTPRPPVEYDSDFMLESSESQMSFSQSPFLSIAKSPALHERELDSLADLPERIKPPYANRLSTSHLRSSSVEDVKLIISEGRPTIEVRRCSMPSVICEHTKQFQTISEESNQGSLLTVPGDTSPSPKPEVFSNVPERDLSNVSNIHSSFATSPTGASNSKYVSADRNLIKNTAPVNTVMDSPVHLEPSSQVGVIQNKSWEMPVDRLETLSTRDFICPNSNIPDQESSLQSFCNSENKVLKENADFLSLRQTELPGNSCAQDPASFMPPQQPCSFPSQSLSDAESISKHMSLSYVANQEPGILQQKNAVQIISSALDTDNESTKDTENTFVLGDVQKTDAFVPVYSDSTIQEASPNFEKAYTLPVLPSEKDFNGSDASTQLNTHYAFSKLTYKSSSGHEVENSTTDTQVISHEKENKLESLVLTHLSRCDSDLCEMNAGMPKGNLNEQDPKHCPESEKCLLSIEDEESQQSILSSLENHSQQSTQPEMHKYGQLVKVELEENAEDDKTENQIPQRMTRNKANTMANQSKQILASCTLLSEKDSESSSPRGRIRLTEDDDPQIHHPRKRKVSRVPQPVQVSPSLLQAKEKTQQSLAAIVDSLKLDEIQPYSSERANPYFEYLHIRKKIEEKRKLLCSVIPQAPQYYDEYVTFNGSYLLDGNPLSKICIPTITPPPSLSDPLKELFRQQEVVRMKLRLQHSIEREKLIVSNEQEVLRVHYRAARTLANQTLPFSACTVLLDAEVYNVPLDSQSDDSKTSVRDRFNARQFMSWLQDVDDKFDKLKTCLLMRQQHEAAALNAVQRLEWQLKLQELDPATYKSISIYEIQEFYVPLVDVNDDFELTPI.

Disordered stretches follow at residues 1–119 and 145–188; these read MPKS…GNKK and ARDN…GETP. Residues 9–20 show a composition bias toward polar residues; that stretch reads PIQSENSDSDSN. Basic and acidic residues-rich tracts occupy residues 41 to 57 and 100 to 117; these read PKIE…EKSS and YSEK…EAGN. Residues 145 to 172 show a composition bias toward polar residues; it reads ARDNSPDSTPNHPSQTTPAQKKTPSSSS. Ser-149 carries the phosphoserine modification. The segment covering 173-187 has biased composition (basic and acidic residues); it reads RQKDKVNKRNERGET. ANK repeat units follow at residues 184–213, 217–246, and 250–280; these read RGET…NVNV, AGWT…DVNT, and DDDT…PFQA. 8 disordered regions span residues 301–338, 409–501, 538–577, 609–683, 727–788, 812–1073, 1097–1227, and 1328–1350; these read KREV…TEKD, KSFK…TRIT, ISTG…MSLQ, QKDF…DSAK, EKNI…FTSL, EKHI…LVND, KHKE…RPPV, and EESN…KPEV. Over residues 306 to 318 the composition is skewed to acidic residues; the sequence is LSDDDESYTDSEE. Polar residues-rich tracts occupy residues 319-328 and 437-454; these read AQSVNPSSVD and KKIS…NSDM. Residues 455 to 467 show a composition bias toward basic and acidic residues; that stretch reads QTKKEYVVSGEHK. The span at 468-480 shows a compositional bias: basic residues; it reads QKGKVKRKLKNQN. Basic and acidic residues predominate over residues 481–498; the sequence is KNKENQELKQEKEGKENT. The residue at position 543 (Ser-543) is a Phosphoserine. The segment covering 565 to 575 has biased composition (polar residues); that stretch reads TCLSPGSSEMS. 8 stretches are compositionally biased toward basic and acidic residues: residues 609–631, 639–649, 658–683, 727–784, 812–969, 977–1037, 1061–1072, and 1103–1157; these read QKDF…DHSP, TLKKMDKEGKT, KERE…DSAK, EKNI…KDSE, EKHI…DKES, HIQE…KDKI, KDTRPKEKRLVN, and KQKE…KQPK. Residue Ser-630 is modified to Phosphoserine. Ser-861 is modified (phosphoserine). The span at 1161–1189 shows a compositional bias: polar residues; sequence SNRSQSVDTKNVMTLGKSSFVSDNSLNRS. Low complexity predominate over residues 1200–1213; it reads SSRSVSMISVASSE. The span at 1328–1344 shows a compositional bias: polar residues; sequence EESNQGSLLTVPGDTSP. Position 1401 is a phosphoserine (Ser-1401). Disordered stretches follow at residues 1721–1744 and 1756–1795; these read NAED…NTMA and LLSE…VPQP. The segment covering 1729–1744 has biased composition (polar residues); sequence NQIPQRMTRNKANTMA.

As to quaternary structure, interacts with the PAS region of the p160 coactivators.

It localises to the nucleus. In terms of biological role, may recruit HDACs to the p160 coactivators/nuclear receptor complex to inhibit ligand-dependent transactivation. This Homo sapiens (Human) protein is Ankyrin repeat domain-containing protein 12 (ANKRD12).